We begin with the raw amino-acid sequence, 150 residues long: D-galactose-binding lectin (150 aa).

D-galactose contacts are provided by histidine 16 and glycine 19. A glycan (N-linked (GlcNAc...) asparagine) is linked at asparagine 26. Residues 35-37, histidine 64, and glycine 67 contribute to the D-galactose site; that span reads DIH. An N-linked (GlcNAc...) asparagine glycan is attached at asparagine 74. Residues 83–85, histidine 108, and glycine 111 contribute to the D-galactose site; that span reads DRH. N-linked (GlcNAc...) asparagine glycosylation occurs at asparagine 118. Position 127–129 (127–129) interacts with D-galactose; it reads DEH.

In terms of assembly, oligomerizes in solution. In terms of processing, the N-terminus is blocked. Expressed in mantle. Expressed 51 and 1.6 fold in mantle and gonads, respectively, relative to that in hemocytes. Expressed at a much lower level in other tissues tested including gill, muscle and hepatopancreas.

With respect to regulation, hemagglutinating activity does not require Ca(2+) ions. Hemagglutinating activity is inhibited by porcine stomach mucin (PSM), bovine submaxillary mucin (BSM) and fetuin. Agglutination of V.proteolyticus bacteria is inhibited by D-galactose, but not by D-glucose. Fungal binding is inhibited by D-galactose, but not by pathogen-associated molecular patterns (PAMPs) including lipopolysaccharide (LPS), peptidoglycan and beta-glucan. D-galactose-binding lectin. Binds both alpha and beta anomer of galactose (Gal). Binds strongly to branched beta-Gal-terminated glycans and weakly to unbranched glycans with alpha-Gal on the end of chains. Has strong affinity for both Gal and GalNAc. Binds glycoproteins containing mucin-type chains. Has hemagglutinating activity towards human group A erythrocytes. Has hemagglutinating activity towards rabbit erythrocytes. Agglutinates V.proteolyticus bacteria. Binds strongly to fungi including species from genera Aspergillus, Alternaria, Fusarium and Haematonectria, and to a lesser extent to fungi from genera Trichoderma. Decreases conidia germination and hyphal growth of fungi. At high concentration, stimulates secretion of cytokines TNF-alpha and IFN-gamma from human peripheral blood cells, and at low concentration reduces hyperexpression of cytokine IL-10 in these cells, indicative of immunomodulatory capability. However, has no effect on IL-4 production. Recognizes pathogen-associated molecular patterns (PAMPs) and binds to peptidoglycan from S.aureus, but has only little binding to beta-1,3-glucan from E.gracilis and lipopolysaccharide (LPS) from E.coli. May be involved in innate immunity acting as an antibacterial or antifungal agent recognizing carbohydrate ligands on the surface of pathogens. The chain is D-galactose-binding lectin from Mytilus trossulus (Blue mussel).